We begin with the raw amino-acid sequence, 314 residues long: Homoserine kinase (314 aa).

96 to 106 contributes to the ATP binding site; that stretch reads PIGSGLGSSAC.

The protein belongs to the GHMP kinase family. Homoserine kinase subfamily.

It localises to the cytoplasm. It carries out the reaction L-homoserine + ATP = O-phospho-L-homoserine + ADP + H(+). The protein operates within amino-acid biosynthesis; L-threonine biosynthesis; L-threonine from L-aspartate: step 4/5. Catalyzes the ATP-dependent phosphorylation of L-homoserine to L-homoserine phosphate. The chain is Homoserine kinase from Haemophilus influenzae (strain PittEE).